We begin with the raw amino-acid sequence, 917 residues long: MSQSISDIKLVKFYYRHYKLGPQDFCREYGGNVDGLNKFLTGNYDSLAARDALRSFWERFNTNQLMKSQAGDEDDGDEFNSTFGGGDSMLLSPIKVTSPMSSSSSSTNTTNSNGQIIGNRSFSSLAEATSNATTTTTSTTTTGGKPESKRVRNLLKTYYGPGIGEGSDSSSMNDPLNIDGPSFNLNSYFDSIVKSSTLNQLIQKDNQMVSEIRTLDGDMKTLVYDNYTKFINATDIIKKMKTNVENMEEGMALLSKNMDLITNCSEKINSTLSVRRDRIDQLSGLQKFFQKLQFLTALPSSLNHCLAMQAYNQAVRYYNSNSGILKQYSHIPSFQNIQNECDSIMKTMKDKLYERLSSLSTSQTDCVESAEVLMDLLEPVELVRSKYLESRKHHTITLLENLEKKSVEHITDYIKELNANFLSEYSYNITSYKSLFINRLDGSDSKKERQQSLLQLEDFSKDLFNKYLNIAKSKLSSFKDPIEKIMALEIINSDVSRLGSELSSHEKITNIINSTVHDQIDFYFDNLQKTIKEHIHQLNSTLNERRDEVLEGHNLQELSDATSKAIVNDIILLFANLKPFFLPTETQFLSSYQDTIFTKIQVKLQQFFLFLVNIHFLEYLDIIATTSNREQFSGRFLLVLSSICLYFENKGITLVVQLMSEFITVAKQGAKKELNVFSFNAPDLCKRVRETGLQILNVFTRLSSQKLDKILKKGLESIPNNNWLVLKEPRDVRSVNDIYLEEILKFQNETSKLLPVINHHHHSLKSHSRTGSGGNSVSSNNSSSNTPDGHRRNPSASSSSSSNNTNTTLFEKKVDHVDFNTLSVLIAIIKLSLKSFNESLRLKTFGTNGCHQIQIDLHYLKLSLYDLFGSNSFDNLLQECENTVTERCVDPLPLAKSIVSKICETKMNKKKNNEAES.

Residues Ile94 to Val151 form a disordered region. Over residues Ser101–Asn113 the composition is skewed to low complexity. Residues Gly114–Glu127 are compositionally biased toward polar residues. Residues Ala128 to Thr142 are compositionally biased toward low complexity. 2 coiled-coil regions span residues Lys229–Asp259 and Phe524–Asp547. The tract at residues His760–Thr805 is disordered. Residues Asn775 to Asn785 show a composition bias toward low complexity.

This sequence belongs to the VPS51 family. As to quaternary structure, component of the Golgi-associated retrograde protein (GARP) complex.

Its function is as follows. May act as component of the GARP complex that is involved in retrograde transport from early and late endosomes to the trans-Golgi network (TGN). The polypeptide is Vacuolar protein sorting-associated protein 51 homolog (vps51) (Dictyostelium discoideum (Social amoeba)).